The chain runs to 470 residues: MIESNHVVLWNRCLEVIKDNVPETTYNTWFAPIVPLKYEDKTLIVQIPSQFFYEILEEKFVDLLRKTLYKAIGEGTKLMYNVMVDKTSIPNQTVNLEASNRSTAVTPKSIVGGNKAPSFLKAPAVQDLDPHLNPNYNFENFIEGYSNKLSRSVAEAVAQNPAGTAFNPLFLYGASGVGKTHLANAIGTKIKELYADKRVLYVSAHLFQVQYTDSVRNNTTNDFINFYQTIDVLIIDDIQEFAGVTKTQNTFFHIFNHLHQNGKQLILTSDRAPVLLQGMEERLLTRFKWGMVAELEKPTVELRKNILRNKIHRDGLQFPPEVIDYIAENVNESVRDLEGIVIAIMARSTIFNKEIDLDLAQHIVHGVVHNETKAVTIDDILKVVCKHFDLEASAIHTKSRKREVVQARQIAMYLAKNYTDFSTSKIGKFIGNKDHATVLHACKTVKGQLEVDKSFQAEVQEIESLLKKKA.

Positions 1–89 (MIESNHVVLW…YNVMVDKTSI (89 aa)) are domain I, interacts with DnaA modulators. The domain II stretch occupies residues 89–130 (IPNQTVNLEASNRSTAVTPKSIVGGNKAPSFLKAPAVQDLDP). The interval 131-348 (HLNPNYNFEN…GIVIAIMARS (218 aa)) is domain III, AAA+ region. ATP-binding residues include glycine 176, glycine 178, lysine 179, and threonine 180. The tract at residues 349–470 (TIFNKEIDLD…EIESLLKKKA (122 aa)) is domain IV, binds dsDNA.

Belongs to the DnaA family. Oligomerizes as a right-handed, spiral filament on DNA at oriC.

It localises to the cytoplasm. In terms of biological role, plays an essential role in the initiation and regulation of chromosomal replication. ATP-DnaA binds to the origin of replication (oriC) to initiate formation of the DNA replication initiation complex once per cell cycle. Binds the DnaA box (a 9 base pair repeat at the origin) and separates the double-stranded (ds)DNA. Forms a right-handed helical filament on oriC DNA; dsDNA binds to the exterior of the filament while single-stranded (ss)DNA is stabiized in the filament's interior. The ATP-DnaA-oriC complex binds and stabilizes one strand of the AT-rich DNA unwinding element (DUE), permitting loading of DNA polymerase. After initiation quickly degrades to an ADP-DnaA complex that is not apt for DNA replication. Binds acidic phospholipids. The sequence is that of Chromosomal replication initiator protein DnaA from Bacteroides thetaiotaomicron (strain ATCC 29148 / DSM 2079 / JCM 5827 / CCUG 10774 / NCTC 10582 / VPI-5482 / E50).